The sequence spans 486 residues: Coronin-1B (486 aa).

Ser2 bears the Phosphoserine; by PKC mark. WD repeat units lie at residues 80 to 120 (GHTG…LTSP), 130 to 170 (GHTK…ELYR), 174 to 213 (LHPDLIYNVSWNRNGSLFCSACKDKSVRIIDPRRGTLVAE), 217 to 260 (AHEG…EPMA), and 265 to 305 (DSSN…PYIH). A disordered region spans residues 404-444 (LKVSRRNVLSDSRPTSAARPAAPAPAAPAPAAAASSSLSGA). Over residues 432 to 444 (APAAAASSSLSGA) the composition is skewed to low complexity. A coiled-coil region spans residues 446-484 (EAGKLEEVMRELRALRALVKEQGERIGRLEEQLGRVENG).

The protein belongs to the WD repeat coronin family. In terms of assembly, forms homooligomers, but does not form complexes with the other coronins. Interacts with Arp2/3 complex components, including ACTR2, ARPC1B and ARPC2. Binds actin. Post-translationally, phosphorylated in vivo by PKC in response to cholinergic stimulation. Phosphorylation on Ser-2 regulates the interaction with the Arp2/3 complex and cell motility in fibroblasts. Phosphorylation does not seem to affect subcellular location.

It localises to the cytoplasm. The protein resides in the cytoskeleton. It is found in the stress fiber. Its function is as follows. Regulates leading edge dynamics and cell motility in fibroblasts. May be involved in cytokinesis and signal transduction. The chain is Coronin-1B (CORO1B) from Oryctolagus cuniculus (Rabbit).